A 438-amino-acid polypeptide reads, in one-letter code: Acyl-CoA dehydrogenase apdG (438 aa).

It belongs to the acyl-CoA dehydrogenase family. FAD is required as a cofactor.

Its pathway is secondary metabolite biosynthesis. Acyl-CoA dehydrogenase; part of the gene cluster that mediates the biosynthesis of aspyridones. The polyketide-amino acid backbone preaspyridone A is first assembled by the PKS-NRPS hybrid apdA. The assembly of preaspyridone A is initiated by loading of malonyl-CoA onto apdA, followed by decarboxylation to yield the acetyl starter unit. The growing polyketide chain then elongates into a tetraketide. The adpA PKS module catalyzes three Claisen condensations, as well as beta-keto processing and methylation. Alpha-methylation step during polyketide synthesis is a prerequisite and a key checkpoint for chain transfer between PKS and NRPS modules. The downstream NRPS module contains the condensation (C), adenylation (A), and thiolation (T) domains and catalyzes the incorporation of tyrosine via the formation of the L-tyrosinyl-thioester and the amide linkage between L-tyrosinyl-thioester and the tetraketide. The bimodular assembly line is terminated with a reductase (R) domain that facilitates formation and release of the tetramic acid product. Because apdA lacks a designated enoylreductase (ER) domain, the required activity is provided the enoyl reductase apdC. ApdC appears to operate with different stereoselectivity in different PKS cycle. Combined with apdC, apdA is proposed to synthesize preaspyridone A via about 20 enzymatic steps. A number of oxidative steps performed successively by the cytochrome P450 monooxygenases apdE and apdB are required for the conversion of preaspyridone A to aspyridone A. The cytochrome P450 monooxygenase apdE is responsible for the oxidative dephenylation of preaspyridone A. Finally, the predicted FAD-dependent monooxygenase apdD and the acyl-CoA dehydrogenase apdG may be involved in the transformation of aspyridone A into aspyridone B. This Emericella nidulans (strain FGSC A4 / ATCC 38163 / CBS 112.46 / NRRL 194 / M139) (Aspergillus nidulans) protein is Acyl-CoA dehydrogenase apdG.